We begin with the raw amino-acid sequence, 483 residues long: Centrosomal protein cep57l1 (483 aa).

The stretch at glutamate 94 to asparagine 228 forms a coiled coil. Disordered stretches follow at residues alanine 237 to proline 261, proline 303 to arginine 325, and lysine 416 to serine 460. Positions arginine 243–lysine 252 are enriched in basic residues. Residues glutamate 375 to glutamine 418 are a coiled coil. Positions arginine 420–glycine 435 are enriched in polar residues.

Belongs to the translokin family. In terms of assembly, interacts with clip1, mis12, ndc80 and zwint. Interacts with gamma-tubulin.

The protein localises to the cytoplasm. It is found in the cytoskeleton. It localises to the microtubule organizing center. The protein resides in the centrosome. Its subcellular location is the chromosome. The protein localises to the centromere. It is found in the kinetochore. It localises to the spindle. In terms of biological role, required for spindle microtubule attachment to both kinetochores and centrosomes. Also functions to tether minus-ends of spindle microtubules to centrosomes. May act by forming ring-like structures around microtubules, or by serving as a cross-linker or scaffold at the attachment site. The chain is Centrosomal protein cep57l1 (cep57l1) from Xenopus tropicalis (Western clawed frog).